Reading from the N-terminus, the 100-residue chain is Putative septation protein SpoVG (100 aa).

This sequence belongs to the SpoVG family.

Its function is as follows. Could be involved in septation. The polypeptide is Putative septation protein SpoVG (Staphylococcus aureus (strain MRSA252)).